Consider the following 952-residue polypeptide: Protocadherin-20 (952 aa).

Residues 1 to 60 form the signal peptide; it reads MRGRGNARSLLVQAVSLRPATWHPCLDMGHLHRPSSRTSHRNLPHVFLLFLFVGPFNCLA. Topologically, residues 61–891 are extracellular; it reads SYSRATELLY…VESMSCMPTL (831 aa). Cadherin domains lie at 64 to 210, 211 to 321, 322 to 536, 537 to 640, 641 to 743, and 747 to 864; these read RATE…APQF, PISE…CPLF, IDSQ…APVF, LQPL…SPRF, INKD…PPLV, and QSNM…EPEI. A glycan (N-linked (GlcNAc...) asparagine) is linked at asparagine 135. Residues asparagine 327 and asparagine 333 are each glycosylated (N-linked (GlcNAc...) asparagine). 5 N-linked (GlcNAc...) asparagine glycosylation sites follow: asparagine 681, asparagine 749, asparagine 804, asparagine 845, and asparagine 850. Residues 892–912 traverse the membrane as a helical segment; it reads VALSVISLGSITLVTGMGIYI. Topologically, residues 913–952 are cytoplasmic; that stretch reads CLRKGKKHHREDDNLEVQIPLKGKIDLCMRERKPVDISNI.

It is found in the cell membrane. Its function is as follows. Potential calcium-dependent cell-adhesion protein. This Mus musculus (Mouse) protein is Protocadherin-20 (Pcdh20).